Consider the following 181-residue polypeptide: Large ribosomal subunit protein uL6m (181 aa).

It belongs to the universal ribosomal protein uL6 family.

The protein resides in the mitochondrion. The polypeptide is Large ribosomal subunit protein uL6m (RPL6) (Acanthamoeba castellanii (Amoeba)).